Consider the following 207-residue polypeptide: Large ribosomal subunit protein bL25 (207 aa).

The protein belongs to the bacterial ribosomal protein bL25 family. CTC subfamily. Part of the 50S ribosomal subunit; part of the 5S rRNA/L5/L18/L25 subcomplex. Contacts the 5S rRNA. Binds to the 5S rRNA independently of L5 and L18.

In terms of biological role, this is one of the proteins that binds to the 5S RNA in the ribosome where it forms part of the central protuberance. This is Large ribosomal subunit protein bL25 from Orientia tsutsugamushi (strain Boryong) (Rickettsia tsutsugamushi).